The chain runs to 111 residues: Ribonuclease P protein component 1 (111 aa).

It belongs to the eukaryotic/archaeal RNase P protein component 1 family. Consists of a catalytic RNA component and at least 4-5 protein subunits.

It localises to the cytoplasm. It carries out the reaction Endonucleolytic cleavage of RNA, removing 5'-extranucleotides from tRNA precursor.. Part of ribonuclease P, a protein complex that generates mature tRNA molecules by cleaving their 5'-ends. This is Ribonuclease P protein component 1 from Hyperthermus butylicus (strain DSM 5456 / JCM 9403 / PLM1-5).